Reading from the N-terminus, the 261-residue chain is MYRARAARAGPEPGSPGRFGILSTGQLRDLLQDEPKLDRIVRLSRKFQGLQLERDACLASNYALAKENLALRPRLEMGRTALAIKYQELREVAENCADKLQRLEKSMHRWSPQCALGWLQAELEEAEQEAEVQMEQLLLGEQSLEAFLPAFQRGRALAHLRRTQAEKLQEVLRRRERSAQPAPTTAAAAAAAATAMDPPKPFPAAAVLPTGAARGPPPAVPRSLPPLDSRPVPPVKGSPGCPFGPAPLLSPRPSQPEPPHR.

Residues 93 to 182 (AENCADKLQR…RRRERSAQPA (90 aa)) form the VPS37 C-terminal domain. The segment at 172–261 (LRRRERSAQP…RPSQPEPPHR (90 aa)) is disordered. Positions 181–195 (PAPTTAAAAAAAATA) are enriched in low complexity. 2 stretches are compositionally biased toward pro residues: residues 215 to 224 (GPPPAVPRSL) and 231 to 261 (PVPP…PPHR).

The protein belongs to the VPS37 family. As to quaternary structure, component of the ESCRT-I complex (endosomal sorting complex required for transport I) which consists of TSG101, VPS28, a VPS37 protein (VPS37A to -D) and MVB12A or MVB12B in a 1:1:1:1 stoichiometry. Interacts with TSG101 and MVB12A. Component of the ESCRT-I complex (endosomal sorting complex required for transport I) which consists of TSG101, VPS28, a VPS37 protein (VPS37A to -D) and UBAP1 in a 1:1:1:1 stoichiometry.

The protein localises to the late endosome membrane. Component of the ESCRT-I complex, a regulator of vesicular trafficking process. Required for the sorting of endocytic ubiquitinated cargos into multivesicular bodies. May be involved in cell growth and differentiation. In Mus musculus (Mouse), this protein is Vacuolar protein sorting-associated protein 37D.